Consider the following 242-residue polypeptide: 1-(5-phosphoribosyl)-5-[(5-phosphoribosylamino)methylideneamino] imidazole-4-carboxamide isomerase (242 aa).

Residue D8 is the Proton acceptor of the active site. The active-site Proton donor is D129.

Belongs to the HisA/HisF family.

It localises to the cytoplasm. It carries out the reaction 1-(5-phospho-beta-D-ribosyl)-5-[(5-phospho-beta-D-ribosylamino)methylideneamino]imidazole-4-carboxamide = 5-[(5-phospho-1-deoxy-D-ribulos-1-ylimino)methylamino]-1-(5-phospho-beta-D-ribosyl)imidazole-4-carboxamide. Its pathway is amino-acid biosynthesis; L-histidine biosynthesis; L-histidine from 5-phospho-alpha-D-ribose 1-diphosphate: step 4/9. The polypeptide is 1-(5-phosphoribosyl)-5-[(5-phosphoribosylamino)methylideneamino] imidazole-4-carboxamide isomerase (Syntrophus aciditrophicus (strain SB)).